A 300-amino-acid polypeptide reads, in one-letter code: Cation-efflux pump FieF (300 aa).

A helical membrane pass occupies residues 24-44; that stretch reads LLIKIFAWWYTGSVSILAALV. Zn(2+) is bound by residues D45 and D49. The next 2 helical transmembrane spans lie at 82–102 and 114–134; these read AALA…LTGI and AGVG…LVTF. Residues H153 and D157 each coordinate Zn(2+). The next 2 helical transmembrane spans lie at 156 to 176 and 178 to 198; these read SDVM…YGWH and ADAL…LRMG.

The protein belongs to the cation diffusion facilitator (CDF) transporter (TC 2.A.4) family. FieF subfamily. As to quaternary structure, homodimer.

It is found in the cell inner membrane. The catalysed reaction is Zn(2+)(in) + H(+)(out) = Zn(2+)(out) + H(+)(in). It catalyses the reaction Cd(2+)(in) + H(+)(out) = Cd(2+)(out) + H(+)(in). The enzyme catalyses Fe(2+)(in) + H(+)(out) = Fe(2+)(out) + H(+)(in). Its function is as follows. Divalent metal cation transporter which exports Zn(2+), Cd(2+) and possibly Fe(2+). May be involved in zinc and iron detoxification by efflux. The chain is Cation-efflux pump FieF from Klebsiella pneumoniae (strain 342).